Consider the following 235-residue polypeptide: uncharacterized protein (235 aa).

Residues C2–P69 enclose the S4 RNA-binding domain. D102 (nucleophile) is an active-site residue.

It belongs to the pseudouridine synthase RsuA family.

The catalysed reaction is a uridine in RNA = a pseudouridine in RNA. This is an uncharacterized protein from Rickettsia prowazekii (strain Madrid E).